A 688-amino-acid polypeptide reads, in one-letter code: Subtilisin-like protease 1 (688 aa).

Positions 1–25 (MMLNKKVVALCTLTLHLFCIFLCLG) are cleaved as a signal peptide. A propeptide spans 26-217 (KEVRSEENGK…IESDKLVSAD (192 aa)) (inhibition peptide). The interval 99 to 129 (EKNKNDNHNNNNNNISSSSSSSSNTFGEEKE) is disordered. The segment covering 106–122 (HNNNNNNISSSSSSSSN) has biased composition (low complexity). A glycan (N-linked (GlcNAc...) asparagine) is linked at asparagine 112. Ca(2+) contacts are provided by asparagine 145, threonine 148, and proline 150. Asparagine 171 is a glycosylation site (N-linked (GlcNAc...) asparagine). Position 205 (glycine 205) interacts with Ca(2+). An N-linked (GlcNAc...) asparagine glycan is attached at asparagine 261. 2 disordered regions span residues 264 to 284 (HAAT…DTFS) and 303 to 332 (NNNN…RPGK). Over residues 303–328 (NNNNYYYSHSSNGHNSSSRNSSSSRS) the composition is skewed to low complexity. N-linked (GlcNAc...) asparagine glycans are attached at residues asparagine 317 and asparagine 322. Aspartate 337 is a Ca(2+) binding site. A Peptidase S8 domain is found at 343-661 (QWGLDLSRLD…AGYADINKAV (319 aa)). 2 disulfides stabilise this stretch: cysteine 369–cysteine 479 and cysteine 458–cysteine 475. Aspartate 372 (charge relay system) is an active-site residue. Residues aspartate 381, glutamate 392, arginine 396, phenylalanine 399, aspartate 400, aspartate 401, aspartate 402, asparagine 404, isoleucine 406, aspartate 408, and aspartate 409 each coordinate Ca(2+). Asparagine 417 carries an N-linked (GlcNAc...) asparagine glycan. Histidine 428 functions as the Charge relay system in the catalytic mechanism. Residues isoleucine 439, asparagine 442, isoleucine 444, and valine 446 each coordinate Ca(2+). N-linked (GlcNAc...) asparagine glycans are attached at residues asparagine 488, asparagine 501, and asparagine 520. An intrachain disulfide couples cysteine 521 to cysteine 534. Residue asparagine 603 is glycosylated (N-linked (GlcNAc...) asparagine). The active-site Charge relay system is serine 606. Asparagine 675 carries N-linked (GlcNAc...) asparagine glycosylation.

Belongs to the peptidase S8 family. Heterodimer between p54 form and prodomain p31; the interaction inhibits p54 catalytic activity. Heterodimer p31-p54 is monomeric at basic pH and dimeric at acidic pH; dimerization is driven by the N-terminal prodomain (p31). Ca(2+) is required as a cofactor. Post-translationally, the prodomain (p31) is cleaved, probably by autocatalysis, during the transport to or in the Golgi apparatus, and remains non-covalently associated with the p54 form as an inhibitor. p54 is further cleaved into the p47 form. The p54-to-p47 conversion can be also autocatalytic. This cleavage is likely occurring in the exoneme prior to egress and is mediated by PMX/plasmepsin X. Heterodimer p31-p54 is activated by cleavage of prodomain (p31) by the aspartic protease PMX; cleavage by PMX abolishes inhibitory capacity of p31. Primary autocatalytic processing of SUB1 is essential for parasite growth; the p54-to-p47 conversion is dispensable for SUB1 functions in the parasites. The disulfide bond between Cys-521 and Cys-534 acts as a redox-sensitive disulfide switch. The oxidized form is required for catalytic activity. In terms of processing, the relevance of the N-glycosylation is not clear. In an insect expression system, SUB1 glycosylation appears to affect its processing into the active mature form suggesting that SUB1 may not be N-glycosylated in parasites.

Its subcellular location is the secreted. The protein resides in the parasitophorous vacuole lumen. It catalyses the reaction Hydrolysis of proteins with broad specificity for peptide bonds, and a preference for a large uncharged residue in P1. Hydrolyzes peptide amides.. Its activity is regulated as follows. p54 and probably p47 forms are inhibited by the non-covalent interaction with the cleaved propeptide. Inhibited by subtilisin propeptide-like protein SUB1-ProM. Inhibited by small molecule MRT12113. In terms of biological role, serine protease which plays an essential role in merozoite invasion of and egress from host erythrocytes by processing and activating various merozoite surface and parasitophorous vacuole proteins. Mediates the proteolytic maturation of serine proteases SERA4, SERA5 and SERA6 just prior to merozoite egress. Prior to merozoite egress, cleaves merozoite surface proteins MSP1, MSP6 and MSP7, which form the MSP1/6/7 complex, and thereby may prime the parasite cell surface for invasion of fresh erythrocytes. Prior to merozoite egress, cleaves MSRP2 converting it to MSRP2 p25 form, and RAP1 converting it to RAP1 p67 form. The polypeptide is Subtilisin-like protease 1 (Plasmodium falciparum (isolate 3D7)).